The sequence spans 469 residues: UDP-N-acetylmuramoylalanine--D-glutamate ligase (469 aa).

125–131 (GTNGKTT) is an ATP binding site.

Belongs to the MurCDEF family.

The protein localises to the cytoplasm. It carries out the reaction UDP-N-acetyl-alpha-D-muramoyl-L-alanine + D-glutamate + ATP = UDP-N-acetyl-alpha-D-muramoyl-L-alanyl-D-glutamate + ADP + phosphate + H(+). It participates in cell wall biogenesis; peptidoglycan biosynthesis. Its function is as follows. Cell wall formation. Catalyzes the addition of glutamate to the nucleotide precursor UDP-N-acetylmuramoyl-L-alanine (UMA). The sequence is that of UDP-N-acetylmuramoylalanine--D-glutamate ligase from Prochlorococcus marinus (strain NATL2A).